A 275-amino-acid polypeptide reads, in one-letter code: Formamidopyrimidine-DNA glycosylase (275 aa).

The Schiff-base intermediate with DNA role is filled by Pro-2. Glu-3 (proton donor) is an active-site residue. Catalysis depends on Lys-58, which acts as the Proton donor; for beta-elimination activity. The DNA site is built by His-93, Arg-111, and Arg-156. An FPG-type zinc finger spans residues Phe-241–Arg-275. The active-site Proton donor; for delta-elimination activity is Arg-265.

Belongs to the FPG family. As to quaternary structure, monomer. Requires Zn(2+) as cofactor.

It catalyses the reaction Hydrolysis of DNA containing ring-opened 7-methylguanine residues, releasing 2,6-diamino-4-hydroxy-5-(N-methyl)formamidopyrimidine.. The catalysed reaction is 2'-deoxyribonucleotide-(2'-deoxyribose 5'-phosphate)-2'-deoxyribonucleotide-DNA = a 3'-end 2'-deoxyribonucleotide-(2,3-dehydro-2,3-deoxyribose 5'-phosphate)-DNA + a 5'-end 5'-phospho-2'-deoxyribonucleoside-DNA + H(+). Functionally, involved in base excision repair of DNA damaged by oxidation or by mutagenic agents. Acts as a DNA glycosylase that recognizes and removes damaged bases. Has a preference for oxidized purines, such as 7,8-dihydro-8-oxoguanine (8-oxoG). Has AP (apurinic/apyrimidinic) lyase activity and introduces nicks in the DNA strand. Cleaves the DNA backbone by beta-delta elimination to generate a single-strand break at the site of the removed base with both 3'- and 5'-phosphates. The polypeptide is Formamidopyrimidine-DNA glycosylase (Burkholderia multivorans (strain ATCC 17616 / 249)).